A 1390-amino-acid polypeptide reads, in one-letter code: Contactin (1390 aa).

A signal peptide spans Met1–Gly18. Residues Ser25–Asn67 are disordered. Over residues Tyr58 to Asn67 the composition is skewed to polar residues. 6 consecutive Ig-like C2-type domains span residues Pro362–Asn463, Met468–Thr561, Pro576–Asn656, Pro661–Ser745, Pro756–Ile843, and Ile848–Ser939. Residue Asn369 is glycosylated (N-linked (GlcNAc...) asparagine). Disulfide bonds link Cys388–Cys446, Cys489–Cys540, Cys593–Cys640, and Cys682–Cys734. Asn537, Asn604, Asn629, Asn691, and Asn774 each carry an N-linked (GlcNAc...) asparagine glycan. 2 disulfides stabilise this stretch: Cys779-Cys827 and Cys870-Cys923. Asn912, Asn986, and Asn991 each carry an N-linked (GlcNAc...) asparagine glycan. Fibronectin type-III domains are found at residues Ala946–Asp1048, Ala1053–Asp1151, Ala1156–Lys1254, and Pro1259–Thr1357. N-linked (GlcNAc...) asparagine glycans are attached at residues Asn1166, Asn1171, and Asn1307. Ala1362 is lipidated: GPI-anchor amidated alanine. The propeptide at Asn1363 to Gln1390 is removed in mature form.

Belongs to the immunoglobulin superfamily. Contactin family. Forms a complex with Nrg and Nrx. Forms a complex composed of septa junction proteins Nrx-IV/Nrx, Tsf2/MTf, Cont and Nrg during late embryogenesis. N-glycosylated. Expressed in ectodermally derived epithelial cells from stage 12. All these tissues, such as epidermis, hindgut, foregut, salivary glands and trachea, which contain pleated septate junctions. Expressed by ectodermally derived epithelial cells and along peripheral nerves. Not present in midline glial cells. Expressed in epithelial cells and glial cells of peripheral nerves.

It localises to the cell membrane. The protein resides in the cell junction. It is found in the septate junction. In terms of biological role, required for organization of septate junctions and paracellular barrier functions. Septate junctions, which are the equivalent of vertebrates tight junctions, are characterized by regular arrays of transverse structures that span the intermembrane space and form a physical barrier to diffusion. The polypeptide is Contactin (Cont) (Drosophila melanogaster (Fruit fly)).